The following is a 310-amino-acid chain: Serine/threonine-protein phosphatase 4 catalytic subunit (310 aa).

Residues Asp-53, His-55, Asp-81, and Asn-113 each coordinate Mn(2+). The active-site Proton donor is His-114. Mn(2+) is bound by residues His-163 and His-237. Leu-310 is subject to Leucine methyl ester.

This sequence belongs to the PPP phosphatase family. PP-4 (PP-X) subfamily. As to quaternary structure, catalytic subunit of the histone H2A phosphatase complex (HTP-C) containing PPH3, PSY2 and PSY4. The cofactor is Mn(2+).

The protein localises to the cytoplasm. The protein resides in the nucleus. The enzyme catalyses O-phospho-L-seryl-[protein] + H2O = L-seryl-[protein] + phosphate. The catalysed reaction is O-phospho-L-threonyl-[protein] + H2O = L-threonyl-[protein] + phosphate. In terms of biological role, involved in the dephosphorylation and activation of the transcription factor GLN3 in response to nutrient availability. Forms the histone H2A phosphatase complex in association with the regulatory subunits PSY2 and PSY4, which dephosphorylates H2AS128ph (gamma-H2A) that has been displaced from sites of DNA lesions in the double-stranded DNA break repair process. Dephosphorylation is necessary for efficient recovery from the DNA damage checkpoint. This is Serine/threonine-protein phosphatase 4 catalytic subunit (PPH3) from Eremothecium gossypii (strain ATCC 10895 / CBS 109.51 / FGSC 9923 / NRRL Y-1056) (Yeast).